The chain runs to 212 residues: Leucyl/phenylalanyl-tRNA--protein transferase (212 aa).

It belongs to the L/F-transferase family.

It is found in the cytoplasm. The catalysed reaction is N-terminal L-lysyl-[protein] + L-leucyl-tRNA(Leu) = N-terminal L-leucyl-L-lysyl-[protein] + tRNA(Leu) + H(+). It carries out the reaction N-terminal L-arginyl-[protein] + L-leucyl-tRNA(Leu) = N-terminal L-leucyl-L-arginyl-[protein] + tRNA(Leu) + H(+). The enzyme catalyses L-phenylalanyl-tRNA(Phe) + an N-terminal L-alpha-aminoacyl-[protein] = an N-terminal L-phenylalanyl-L-alpha-aminoacyl-[protein] + tRNA(Phe). In terms of biological role, functions in the N-end rule pathway of protein degradation where it conjugates Leu, Phe and, less efficiently, Met from aminoacyl-tRNAs to the N-termini of proteins containing an N-terminal arginine or lysine. In Christiangramia forsetii (strain DSM 17595 / CGMCC 1.15422 / KT0803) (Gramella forsetii), this protein is Leucyl/phenylalanyl-tRNA--protein transferase.